The primary structure comprises 256 residues: MADWSAEQYLKFEDERTRPARELLAQVPVLAPRKVADIGCGPGNSTELLVERWPQAAVIGVDTSADMLRQARERLPQQKFIEANVAHWAPPPDTDVLFANAVFQWVPDHLKHLKRLVSGLETGGALAVQMPDNLDEPSHILMREVAFEEPWRHQLSKAAESRDMLPKPGVYYDALRPLCSRLEIWHTVYNHVLDDAAAIVEWVKGTGLRPFIDPLDLHERKAYLAAYTARVAAAYPPQADGKVLLRFPRIFFVAIK.

This sequence belongs to the methyltransferase superfamily. Tam family.

Its subcellular location is the cytoplasm. The catalysed reaction is trans-aconitate + S-adenosyl-L-methionine = (E)-3-(methoxycarbonyl)pent-2-enedioate + S-adenosyl-L-homocysteine. Catalyzes the S-adenosylmethionine monomethyl esterification of trans-aconitate. This chain is Trans-aconitate 2-methyltransferase, found in Rhodopseudomonas palustris (strain BisB5).